Reading from the N-terminus, the 725-residue chain is Glyoxysomal fatty acid beta-oxidation multifunctional protein MFP-a (725 aa).

In the N-terminal section; belongs to the enoyl-CoA hydratase/isomerase family. It in the central section; belongs to the 3-hydroxyacyl-CoA dehydrogenase family.

The protein resides in the glyoxysome. The enzyme catalyses a (3S)-3-hydroxyacyl-CoA = a (2E)-enoyl-CoA + H2O. It carries out the reaction a 4-saturated-(3S)-3-hydroxyacyl-CoA = a (3E)-enoyl-CoA + H2O. The catalysed reaction is a (3Z)-enoyl-CoA = a 4-saturated (2E)-enoyl-CoA. It catalyses the reaction a (3E)-enoyl-CoA = a 4-saturated (2E)-enoyl-CoA. The enzyme catalyses (3S)-3-hydroxybutanoyl-CoA = (3R)-3-hydroxybutanoyl-CoA. It carries out the reaction a (3S)-3-hydroxyacyl-CoA + NAD(+) = a 3-oxoacyl-CoA + NADH + H(+). It participates in lipid metabolism; fatty acid beta-oxidation. The polypeptide is Glyoxysomal fatty acid beta-oxidation multifunctional protein MFP-a (Cucumis sativus (Cucumber)).